The following is a 252-amino-acid chain: MILAVDIGNTNIVIGLMEGTETVDTYRITTRSNHTSDEYGLMILQFLQLSNSSPDDVQDAIISSVVPKVMHSFISSMIKFLGIDPMIIGPGIKTGMNIRMDDPRSLGADLLADCAGAYTTYGGPVLVIDMGTATTYNYVDEKGAILAGLITTGIGTAAAALASNTAQLPEVQITRPKSILAANTKDAMQAGLYYDCLGGIERTITQFREELDTDFKVVATGGMSRIFDCPLIDIVDPTLIFKGMASIYAKNV.

6-13 (DIGNTNIV) provides a ligand contact to ATP. 107-110 (GADL) serves as a coordination point for substrate. Catalysis depends on Asp-109, which acts as the Proton acceptor. Asp-129 contributes to the K(+) binding site. Thr-132 lines the ATP pocket. Thr-184 serves as a coordination point for substrate.

This sequence belongs to the type III pantothenate kinase family. Homodimer. NH4(+) serves as cofactor. K(+) is required as a cofactor.

It is found in the cytoplasm. It carries out the reaction (R)-pantothenate + ATP = (R)-4'-phosphopantothenate + ADP + H(+). The protein operates within cofactor biosynthesis; coenzyme A biosynthesis; CoA from (R)-pantothenate: step 1/5. Catalyzes the phosphorylation of pantothenate (Pan), the first step in CoA biosynthesis. The protein is Type III pantothenate kinase of Bifidobacterium animalis subsp. lactis (strain AD011).